A 208-amino-acid polypeptide reads, in one-letter code: Proheparin-binding EGF-like growth factor (208 aa).

The signal sequence occupies residues 1 to 23; it reads MKLLPSVVLKLFLAAVLSALVTG. Residues 24 to 62 constitute a propeptide that is removed on maturation; that stretch reads ESLERLRRGLAAATSNPDPPTGTTNQLLPTGADRAQEVQ. Topologically, residues 24–160 are extracellular; that stretch reads ESLERLRRGL…ENPLYTYDHT (137 aa). The tract at residues 82-103 is disordered; that stretch reads ALATPGKEKNGKKKRKGKGLGK. An O-linked (GalNAc...) threonine glycan is attached at Thr-85. Over residues 91–102 the composition is skewed to basic residues; the sequence is NGKKKRKGKGLG. The EGF-like domain maps to 104–144; it reads KRDPCLKKYKDYCIHGECRYLKELRIPSCHCLPGYHGQRCH. 3 disulfides stabilise this stretch: Cys-108–Cys-121, Cys-116–Cys-132, and Cys-134–Cys-143. Residues 149–208 constitute a propeptide, C-terminal; it reads PVENPLYTYDHTTVLAVVAVVLSSVCLLVIVGLLMFRYHRRGGYDLESEEKVKLGMASSH. A helical membrane pass occupies residues 161–184; it reads TVLAVVAVVLSSVCLLVIVGLLMF. Topologically, residues 185 to 208 are cytoplasmic; sequence RYHRRGGYDLESEEKVKLGMASSH.

As to quaternary structure, interacts with FBLN1. Interacts with EGFR and ERBB4. Post-translationally, O-glycosylated. As to expression, most abundant in skeletal muscle, lung, spleen brain and heart.

Its subcellular location is the secreted. The protein resides in the extracellular space. It localises to the cell membrane. Its function is as follows. Growth factor that mediates its effects via EGFR, ERBB2 and ERBB4. Required for normal cardiac valve formation and normal heart function. Promotes smooth muscle cell proliferation. May be involved in macrophage-mediated cellular proliferation. It is mitogenic for fibroblasts, but not endothelial cells. It is able to bind EGF receptor/EGFR with higher affinity than EGF itself and is a far more potent mitogen for smooth muscle cells than EGF. Also acts as a diphtheria toxin receptor. This is Proheparin-binding EGF-like growth factor (Hbegf) from Rattus norvegicus (Rat).